The primary structure comprises 260 residues: Ribosomal RNA small subunit methyltransferase G (260 aa).

A disordered region spans residues Met-1 to Asp-45. Positions Gly-9–Gly-20 are enriched in low complexity. Residues Pro-33–Asp-45 are compositionally biased toward polar residues. S-adenosyl-L-methionine-binding residues include Gly-123, Phe-128, and Arg-193.

It belongs to the methyltransferase superfamily. RNA methyltransferase RsmG family.

Its subcellular location is the cytoplasm. It catalyses the reaction guanosine(527) in 16S rRNA + S-adenosyl-L-methionine = N(7)-methylguanosine(527) in 16S rRNA + S-adenosyl-L-homocysteine. Its function is as follows. Specifically methylates the N7 position of guanine in position 527 of 16S rRNA. This Bradyrhizobium diazoefficiens (strain JCM 10833 / BCRC 13528 / IAM 13628 / NBRC 14792 / USDA 110) protein is Ribosomal RNA small subunit methyltransferase G.